A 255-amino-acid polypeptide reads, in one-letter code: MNTARLNQGTPLLLNAVSKHYAENIVLNQLDLHIPAGQFVAVVGRSGGGKSTLLHLLAGLETPTAGDVLAGTTPLAEIQDDTRMMFQDARLLPWKSVIDNVGLGLKGQWRDAARRALAAVGLENRAGEWPAALSGGQKQRVALARALIHRPGLLLLDEPLGALDALTRLEMQDLIVSLWQQHGFTVLLVTHDVSEAVAMADRVLLIEEGKISLDLTVDIPRPRRLGSVRLAELEAEVLQRVMRRGHSEQLIRRHG.

One can recognise an ABC transporter domain in the interval 12 to 233 (LLLNAVSKHY…RLGSVRLAEL (222 aa)). 44-51 (GRSGGGKS) is an ATP binding site.

It belongs to the ABC transporter superfamily. Aliphatic sulfonates importer (TC 3.A.1.17.2) family. The complex is composed of two ATP-binding proteins (SsuB), two transmembrane proteins (SsuC) and a solute-binding protein (SsuA).

The protein resides in the cell inner membrane. The enzyme catalyses ATP + H2O + aliphatic sulfonate-[sulfonate-binding protein]Side 1 = ADP + phosphate + aliphatic sulfonateSide 2 + [sulfonate-binding protein]Side 1.. Part of the ABC transporter complex SsuABC involved in aliphatic sulfonates import. Responsible for energy coupling to the transport system. The sequence is that of Aliphatic sulfonates import ATP-binding protein SsuB from Shigella flexneri serotype 5b (strain 8401).